Consider the following 126-residue polypeptide: Fluoride-specific ion channel FluC (126 aa).

The next 4 helical transmembrane spans lie at 4–24, 33–53, 67–87, and 97–117; these read PLLSIALGSVLGAWLRWFLGL, IPLGTVTVNLVGGFIIGFAMA, FVITGFCGALTTFSTFSIEIV, and MAMLAISIHLIGSLIFTCLGL. Glycine 74 and threonine 77 together coordinate Na(+).

This sequence belongs to the fluoride channel Fluc/FEX (TC 1.A.43) family.

The protein localises to the cell inner membrane. The enzyme catalyses fluoride(in) = fluoride(out). With respect to regulation, na(+) is not transported, but it plays an essential structural role and its presence is essential for fluoride channel function. Fluoride-specific ion channel. Important for reducing fluoride concentration in the cell, thus reducing its toxicity. This chain is Fluoride-specific ion channel FluC, found in Acinetobacter baumannii (strain ATCC 17978 / DSM 105126 / CIP 53.77 / LMG 1025 / NCDC KC755 / 5377).